We begin with the raw amino-acid sequence, 70 residues long: Peptide Hp1035 (70 aa).

Residues 1–23 (MKTQFVILLVALVLFQMFAQSEA) form the signal peptide. F36 bears the Phenylalanine amide mark. Residues 40 to 70 (GLQDLDMDDLDQLFDGEISQADINFLNQLMR) constitute a propeptide that is removed on maturation.

It belongs to the non-disulfide-bridged peptide (NDBP) superfamily. Short antimicrobial peptide (group 4) family. In terms of tissue distribution, expressed by the venom gland.

The protein resides in the secreted. The protein localises to the target cell membrane. Functionally, amphipathic peptide with antimicrobial activity. This chain is Peptide Hp1035, found in Heterometrus petersii (Asian forest scorpion).